Consider the following 541-residue polypeptide: Chaperonin GroEL 2 (541 aa).

Residues 29–32 (TLGP), 86–90 (DGTTT), Gly414, 478–480 (DAA), and Asp494 each bind ATP.

Belongs to the chaperonin (HSP60) family. In terms of assembly, forms a cylinder of 14 subunits composed of two heptameric rings stacked back-to-back. Interacts with the co-chaperonin GroES.

The protein resides in the cytoplasm. It carries out the reaction ATP + H2O + a folded polypeptide = ADP + phosphate + an unfolded polypeptide.. In terms of biological role, together with its co-chaperonin GroES, plays an essential role in assisting protein folding. The GroEL-GroES system forms a nano-cage that allows encapsulation of the non-native substrate proteins and provides a physical environment optimized to promote and accelerate protein folding. The sequence is that of Chaperonin GroEL 2 from Frankia casuarinae (strain DSM 45818 / CECT 9043 / HFP020203 / CcI3).